We begin with the raw amino-acid sequence, 752 residues long: Putative xanthine dehydrogenase molybdenum-binding subunit XdhA (752 aa).

The Mo-molybdopterin site is built by glutamine 206, phenylalanine 237, arginine 350, and alanine 516.

Belongs to the xanthine dehydrogenase family. In terms of assembly, heterotrimer of XdhA, XdhB and XdhC. Mo-molybdopterin serves as cofactor.

It catalyses the reaction xanthine + NAD(+) + H2O = urate + NADH + H(+). The catalysed reaction is hypoxanthine + NAD(+) + H2O = xanthine + NADH + H(+). Its pathway is purine metabolism; hypoxanthine degradation; urate from hypoxanthine: step 1/2. It participates in purine metabolism; hypoxanthine degradation; urate from hypoxanthine: step 2/2. Its function is as follows. Presumed to be a dehydrogenase, but possibly an oxidase. Participates in limited purine salvage (requires aspartate) but does not support aerobic growth on purines as the sole carbon source (purine catabolism). Deletion results in increased adenine sensitivity, suggesting that this protein contributes to the conversion of adenine to guanine nucleotides during purine salvage. This Escherichia coli (strain K12) protein is Putative xanthine dehydrogenase molybdenum-binding subunit XdhA (xdhA).